Here is a 219-residue protein sequence, read N- to C-terminus: Deoxyribose-phosphate aldolase (219 aa).

The active-site Proton donor/acceptor is Asp89. Residue Lys151 is the Schiff-base intermediate with acetaldehyde of the active site. The active-site Proton donor/acceptor is the Lys180.

The protein belongs to the DeoC/FbaB aldolase family. DeoC type 1 subfamily.

It localises to the cytoplasm. The catalysed reaction is 2-deoxy-D-ribose 5-phosphate = D-glyceraldehyde 3-phosphate + acetaldehyde. Its pathway is carbohydrate degradation; 2-deoxy-D-ribose 1-phosphate degradation; D-glyceraldehyde 3-phosphate and acetaldehyde from 2-deoxy-alpha-D-ribose 1-phosphate: step 2/2. In terms of biological role, catalyzes a reversible aldol reaction between acetaldehyde and D-glyceraldehyde 3-phosphate to generate 2-deoxy-D-ribose 5-phosphate. The sequence is that of Deoxyribose-phosphate aldolase from Coprothermobacter proteolyticus (strain ATCC 35245 / DSM 5265 / OCM 4 / BT).